A 249-amino-acid polypeptide reads, in one-letter code: Ribosomal RNA small subunit methyltransferase G (249 aa).

The S-adenosyl-L-methionine site is built by glycine 86, phenylalanine 91, and arginine 178.

This sequence belongs to the methyltransferase superfamily. RNA methyltransferase RsmG family.

The protein resides in the cytoplasm. Functionally, specifically methylates the N7 position of a guanine in 16S rRNA. This is Ribosomal RNA small subunit methyltransferase G from Bifidobacterium adolescentis (strain ATCC 15703 / DSM 20083 / NCTC 11814 / E194a).